Reading from the N-terminus, the 437-residue chain is Arginine biosynthesis bifunctional protein ArgJ, mitochondrial (437 aa).

Residues T173, K200, T211, E297, N432, and S437 each coordinate substrate. The Nucleophile role is filled by T211.

Belongs to the ArgJ family. As to quaternary structure, heterodimer of an alpha and a beta chain. In terms of processing, the alpha and beta chains are autoproteolytically processed from a single precursor protein within the mitochondrion.

Its subcellular location is the mitochondrion matrix. The enzyme catalyses N(2)-acetyl-L-ornithine + L-glutamate = N-acetyl-L-glutamate + L-ornithine. The catalysed reaction is L-glutamate + acetyl-CoA = N-acetyl-L-glutamate + CoA + H(+). The protein operates within amino-acid biosynthesis; L-arginine biosynthesis; L-ornithine and N-acetyl-L-glutamate from L-glutamate and N(2)-acetyl-L-ornithine (cyclic): step 1/1. It participates in amino-acid biosynthesis; L-arginine biosynthesis; N(2)-acetyl-L-ornithine from L-glutamate: step 1/4. In terms of biological role, catalyzes two activities which are involved in the cyclic version of arginine biosynthesis: the synthesis of acetylglutamate from glutamate and acetyl-CoA, and of ornithine by transacetylation between acetylornithine and glutamate. This is Arginine biosynthesis bifunctional protein ArgJ, mitochondrial from Zygosaccharomyces rouxii (strain ATCC 2623 / CBS 732 / NBRC 1130 / NCYC 568 / NRRL Y-229).